We begin with the raw amino-acid sequence, 437 residues long: Enolase 1 (437 aa).

Lysine 60 is covalently cross-linked (Glycyl lysine isopeptide (Lys-Gly) (interchain with G-Cter in ubiquitin)). Serine 119 and serine 138 each carry phosphoserine. Residues histidine 160 and glutamate 169 each coordinate substrate. Serine 188 carries the phosphoserine modification. Glutamate 212 functions as the Proton donor in the catalytic mechanism. Lysine 243 participates in a covalent cross-link: Glycyl lysine isopeptide (Lys-Gly) (interchain with G-Cter in ubiquitin). Mg(2+)-binding residues include aspartate 247 and glutamate 296. Position 296 (glutamate 296) interacts with substrate. Threonine 313 is modified (phosphothreonine). Residue aspartate 321 participates in substrate binding. Aspartate 321 is a binding site for Mg(2+). A Phosphothreonine modification is found at threonine 324. Residue lysine 346 is the Proton acceptor of the active site. Lysine 358 participates in a covalent cross-link: Glycyl lysine isopeptide (Lys-Gly) (interchain with G-Cter in ubiquitin). Residues 373–376 (SHRS) and lysine 397 each bind substrate.

It belongs to the enolase family. As to quaternary structure, homodimer. Requires Mg(2+) as cofactor.

The protein localises to the cytoplasm. It carries out the reaction (2R)-2-phosphoglycerate = phosphoenolpyruvate + H2O. Its pathway is carbohydrate degradation; glycolysis; pyruvate from D-glyceraldehyde 3-phosphate: step 4/5. This chain is Enolase 1 (ENO1), found in Saccharomyces cerevisiae (strain ATCC 204508 / S288c) (Baker's yeast).